The primary structure comprises 473 residues: MKTLYSLRRFYPVETLFNGTLALAGRDQETTGFAWWAGNARLINLSGKLLGAHVAHAGLIVFWAGAMNLFEVAHFVPEKPMYEQGLILLPHLATLGWGVGPGGEVIDTFPYFVSGVLHLISSAVLGFGGIYHALLGPETLEESFPFFGYVWKDRNKMTTILGIHLILLGIGAFLLVLKALYFGGVYDTWAPGGGDVRKITNLTLSPSVIFGYLLKSPFGGEGWIVSVDDLEDIIGGHVWLGSICIVGGIWHILTKPFAWARRALVWSGEAYLSYSLGALSVFGFIACCFVWFNNTAYPSEFYGPTGPEASQAQAFTFLVRDQRLGANVGSAQGPTGLGKYLMRSPTGEVIFGGETMRFWDLRAPWLEPLRGPNGLDLSRLKKDIQPWQERRSAEYMTHAPLGSLNSVGGVATEINAVNYVSPRSWLATSHFVLGFFLFVGHLWHAGRARAAAAGFEKGIDRDFEPVLSMTPLN.

The propeptide occupies 1 to 14 (MKTLYSLRRFYPVE). N-acetylthreonine is present on Thr15. The residue at position 15 (Thr15) is a Phosphothreonine. Transmembrane regions (helical) follow at residues 69 to 93 (LFEVAHFVPEKPMYEQGLILLPHLA), 134 to 155 (LLGPETLEESFPFFGYVWKDRN), 178 to 200 (KALYFGGVYDTWAPGGGDVRKIT), 255 to 275 (KPFAWARRALVWSGEAYLSYS), and 291 to 312 (WFNNTAYPSEFYGPTGPEASQA). Glu367 provides a ligand contact to [CaMn4O5] cluster. A helical transmembrane segment spans residues 447-471 (RARAAAAGFEKGIDRDFEPVLSMTP).

The protein belongs to the PsbB/PsbC family. PsbC subfamily. As to quaternary structure, PSII is composed of 1 copy each of membrane proteins PsbA, PsbB, PsbC, PsbD, PsbE, PsbF, PsbH, PsbI, PsbJ, PsbK, PsbL, PsbM, PsbT, PsbX, PsbY, PsbZ, Psb30/Ycf12, at least 3 peripheral proteins of the oxygen-evolving complex and a large number of cofactors. It forms dimeric complexes. It depends on Binds multiple chlorophylls and provides some of the ligands for the Ca-4Mn-5O cluster of the oxygen-evolving complex. It may also provide a ligand for a Cl- that is required for oxygen evolution. PSII binds additional chlorophylls, carotenoids and specific lipids. as a cofactor.

Its subcellular location is the plastid. The protein localises to the chloroplast thylakoid membrane. In terms of biological role, one of the components of the core complex of photosystem II (PSII). It binds chlorophyll and helps catalyze the primary light-induced photochemical processes of PSII. PSII is a light-driven water:plastoquinone oxidoreductase, using light energy to abstract electrons from H(2)O, generating O(2) and a proton gradient subsequently used for ATP formation. The sequence is that of Photosystem II CP43 reaction center protein from Buxus microphylla (Littleleaf boxwood).